Reading from the N-terminus, the 242-residue chain is Endothelial protein C receptor (242 aa).

The N-terminal stretch at 1–17 (MLTKFLPLLLLLLPGCA) is a signal peptide. Residues 18–214 (LCNSDGSQSL…GSQTGRSYTS (197 aa)) are Extracellular-facing. 5 N-linked (GlcNAc...) asparagine glycosylation sites follow: N46, N63, N140, N166, and N176. Intrachain disulfides connect C119/C190 and C223/C236. A helical transmembrane segment spans residues 215–235 (LVLGILMGCFIIAGVAVGIFM). Topologically, residues 236 to 242 (CTSGRRC) are cytoplasmic.

Expressed in endothelial cells.

The protein localises to the membrane. Functionally, binds activated protein C. Enhances protein C activation by the thrombin-thrombomodulin complex; plays a role in the protein C pathway controlling blood coagulation. This is Endothelial protein C receptor (Procr) from Mus musculus (Mouse).